A 142-amino-acid polypeptide reads, in one-letter code: Large ribosomal subunit protein uL13 (142 aa).

It belongs to the universal ribosomal protein uL13 family. Part of the 50S ribosomal subunit.

Its function is as follows. This protein is one of the early assembly proteins of the 50S ribosomal subunit, although it is not seen to bind rRNA by itself. It is important during the early stages of 50S assembly. The protein is Large ribosomal subunit protein uL13 of Histophilus somni (Haemophilus somnus).